A 209-amino-acid polypeptide reads, in one-letter code: Uracil phosphoribosyltransferase (209 aa).

5-phospho-alpha-D-ribose 1-diphosphate is bound by residues Arg79, Arg104, and 131-139 (DPMLATGGS). Uracil is bound by residues Ile194 and 199–201 (GDA). A 5-phospho-alpha-D-ribose 1-diphosphate-binding site is contributed by Asp200.

This sequence belongs to the UPRTase family. The cofactor is Mg(2+).

The catalysed reaction is UMP + diphosphate = 5-phospho-alpha-D-ribose 1-diphosphate + uracil. It participates in pyrimidine metabolism; UMP biosynthesis via salvage pathway; UMP from uracil: step 1/1. With respect to regulation, allosterically activated by GTP. Functionally, catalyzes the conversion of uracil and 5-phospho-alpha-D-ribose 1-diphosphate (PRPP) to UMP and diphosphate. The protein is Uracil phosphoribosyltransferase of Lacticaseibacillus paracasei (strain ATCC 334 / BCRC 17002 / CCUG 31169 / CIP 107868 / KCTC 3260 / NRRL B-441) (Lactobacillus paracasei).